We begin with the raw amino-acid sequence, 217 residues long: uncharacterized protein (217 aa).

The ABC transporter domain maps to 14 to 217 (LAVNNLCIER…NELATEIISL (204 aa)). 46-53 (GEIGSGKT) serves as a coordination point for ATP.

The protein belongs to the ABC transporter superfamily.

This is an uncharacterized protein from Haemophilus influenzae (strain ATCC 51907 / DSM 11121 / KW20 / Rd).